We begin with the raw amino-acid sequence, 161 residues long: Dihydrofolate reductase type 1 from Tn4003 (161 aa).

One can recognise a DHFR domain in the interval 2-157; sequence TLSIIVAHDK…IPHTFLHLVR (156 aa). A substrate-binding site is contributed by 6 to 8; the sequence is IVA. Residues 7–8 and 15–20 contribute to the NADP(+) site; these read VA and IGYQNQ. Substrate is bound at residue D28. NADP(+) is bound at residue 44 to 47; sequence ARKT. Residue R58 participates in substrate binding. Residues 63–66 and 93–98 contribute to the NADP(+) site; these read LTNQ and FGGQTL. A substrate-binding site is contributed by T112.

This sequence belongs to the dihydrofolate reductase family.

The catalysed reaction is (6S)-5,6,7,8-tetrahydrofolate + NADP(+) = 7,8-dihydrofolate + NADPH + H(+). Its pathway is cofactor biosynthesis; tetrahydrofolate biosynthesis; 5,6,7,8-tetrahydrofolate from 7,8-dihydrofolate: step 1/1. In terms of biological role, key enzyme in folate metabolism. Catalyzes an essential reaction for de novo glycine and purine synthesis, and for DNA precursor synthesis. In Staphylococcus aureus, this protein is Dihydrofolate reductase type 1 from Tn4003 (dfrA).